The chain runs to 325 residues: Flavin-dependent thymidylate synthase (325 aa).

A ThyX domain is found at 12-267 (ISVRLLEYTG…PRLFRWAGPS (256 aa)). FAD contacts are provided by residues Ser-65, 89–91 (RHR), and Gln-97. Residues 86-89 (QLVR) and 97-101 (QLSHR) each bind dUMP. The ThyX motif signature appears at 89–99 (RHRVASYTQLS). The segment at 110-159 (AALKACESIGLDCPSKPAETEGGRKAAYRLYSQALERAARDFGASERFAI) is insert. DUMP is bound at residue Arg-205. FAD is bound at residue 221 to 223 (NAR). Arg-233 lines the dUMP pocket. The active-site Involved in ionization of N3 of dUMP, leading to its activation is Arg-233.

This sequence belongs to the thymidylate synthase ThyX family. In terms of assembly, homotetramer. The cofactor is FAD.

The enzyme catalyses dUMP + (6R)-5,10-methylene-5,6,7,8-tetrahydrofolate + NADPH + H(+) = dTMP + (6S)-5,6,7,8-tetrahydrofolate + NADP(+). The protein operates within pyrimidine metabolism; dTTP biosynthesis. Catalyzes the reductive methylation of 2'-deoxyuridine-5'-monophosphate (dUMP) to 2'-deoxythymidine-5'-monophosphate (dTMP) while utilizing 5,10-methylenetetrahydrofolate (mTHF) as the methyl donor, and NADPH and FADH(2) as the reductant. In Aeropyrum pernix (strain ATCC 700893 / DSM 11879 / JCM 9820 / NBRC 100138 / K1), this protein is Flavin-dependent thymidylate synthase.